The chain runs to 533 residues: Peptide chain release factor 3 (533 aa).

Residues 9 to 284 (ARRRTFAIIS…ALCQLSPPPL (276 aa)) enclose the tr-type G domain. GTP-binding positions include 18-25 (SHPDAGKT), 95-99 (DTPGH), and 149-152 (NKLD).

This sequence belongs to the TRAFAC class translation factor GTPase superfamily. Classic translation factor GTPase family. PrfC subfamily.

The protein localises to the cytoplasm. In terms of biological role, increases the formation of ribosomal termination complexes and stimulates activities of RF-1 and RF-2. It binds guanine nucleotides and has strong preference for UGA stop codons. It may interact directly with the ribosome. The stimulation of RF-1 and RF-2 is significantly reduced by GTP and GDP, but not by GMP. The protein is Peptide chain release factor 3 of Cupriavidus pinatubonensis (strain JMP 134 / LMG 1197) (Cupriavidus necator (strain JMP 134)).